The following is a 184-amino-acid chain: GTP cyclohydrolase 1 (184 aa).

Positions 75, 78, and 146 each coordinate Zn(2+).

This sequence belongs to the GTP cyclohydrolase I family. In terms of assembly, toroid-shaped homodecamer, composed of two pentamers of five dimers.

It catalyses the reaction GTP + H2O = 7,8-dihydroneopterin 3'-triphosphate + formate + H(+). The protein operates within cofactor biosynthesis; 7,8-dihydroneopterin triphosphate biosynthesis; 7,8-dihydroneopterin triphosphate from GTP: step 1/1. This is GTP cyclohydrolase 1 from Chromohalobacter salexigens (strain ATCC BAA-138 / DSM 3043 / CIP 106854 / NCIMB 13768 / 1H11).